A 234-amino-acid chain; its full sequence is Glycerol uptake facilitator protein (234 aa).

6 helical membrane passes run 9–29, 37–57, 61–81, 83–103, 135–155, and 159–179; these read FLGT…VVLP, GWIV…FVSG, PAHL…LPWA, VLPY…LVWL, LISE…LGLY, and AGIG…SLGG. The NPA 1 signature appears at 65 to 67; the sequence is NPA. An NPA 2 motif is present at residues 186–188; that stretch reads NPA. A helical transmembrane segment spans residues 214 to 234; sequence WIPVVGPVIGAALAVLVFSLF.

It belongs to the MIP/aquaporin (TC 1.A.8) family.

Its subcellular location is the cell membrane. It carries out the reaction glycerol(in) = glycerol(out). Mediates glycerol diffusion across the cytoplasmic membrane via a pore-type mechanism. The sequence is that of Glycerol uptake facilitator protein (glpF) from Streptococcus pneumoniae (strain ATCC BAA-255 / R6).